Here is a 275-residue protein sequence, read N- to C-terminus: Polyamine aminopropyltransferase (275 aa).

Residues 2 to 235 (ELWFTEKQTK…GLWTFTIGSK (234 aa)) enclose the PABS domain. Gln-31 is an S-methyl-5'-thioadenosine binding site. Residues His-62 and Asp-86 each contribute to the spermidine site. S-methyl-5'-thioadenosine-binding positions include Glu-106 and 137–138 (DG). Catalysis depends on Asp-155, which acts as the Proton acceptor. 155 to 158 (DSTE) is a binding site for spermidine. An S-methyl-5'-thioadenosine-binding site is contributed by Pro-162.

This sequence belongs to the spermidine/spermine synthase family. As to quaternary structure, homodimer or homotetramer.

Its subcellular location is the cytoplasm. The catalysed reaction is S-adenosyl 3-(methylsulfanyl)propylamine + putrescine = S-methyl-5'-thioadenosine + spermidine + H(+). It participates in amine and polyamine biosynthesis; spermidine biosynthesis; spermidine from putrescine: step 1/1. In terms of biological role, catalyzes the irreversible transfer of a propylamine group from the amino donor S-adenosylmethioninamine (decarboxy-AdoMet) to putrescine (1,4-diaminobutane) to yield spermidine. The chain is Polyamine aminopropyltransferase from Bacillus mycoides (strain KBAB4) (Bacillus weihenstephanensis).